A 280-amino-acid polypeptide reads, in one-letter code: Protein IMPACT homolog (280 aa).

Residues 9–109 enclose the RWD domain; that stretch reads DELLALESIY…QAAAERESKL (101 aa).

Belongs to the IMPACT family. As to quaternary structure, interacts (via N-terminus) with gcn1 (via C-terminus); this interaction reduces the gcn1-gcn20 complex formation and prevents the interaction of gcn1 with gcn2 protein kinase and gcn2 activation in amino acid-starved cells. Interacts (via C-terminus) with act1; this interaction occurs in a gcn1-independent manner. Interacts with rpl39; this interaction occurs in a gcn1-independent manner. Associates (via middle region) with ribosomes; this association occurs in a gcn1-independent manner and persists under amino acid starvation conditions.

It localises to the cytoplasm. The protein resides in the nucleus. Functionally, translational regulator that ensures constant high levels of translation under amino acid starvation. Plays a role as a negative regulator of the gcn2 kinase activity; impairs gcn1-mediated gcn2 activation, and hence gcn2-mediated eIF-2-alpha phosphorylation in amino acid-starved cells and subsequent down-regulation of protein synthesis. In normal conditions, it resides in a actin complex and has no activity. The polypeptide is Protein IMPACT homolog (yih1) (Schizosaccharomyces pombe (strain 972 / ATCC 24843) (Fission yeast)).